A 341-amino-acid chain; its full sequence is Ribosomal RNA small subunit methyltransferase H (341 aa).

S-adenosyl-L-methionine is bound by residues 47 to 49 (GGY), aspartate 64, phenylalanine 91, aspartate 109, and glutamine 116. Positions 292 to 318 (VAASEDEASRNPRARSAKLRAGVRTPA) are disordered.

This sequence belongs to the methyltransferase superfamily. RsmH family.

The protein resides in the cytoplasm. The catalysed reaction is cytidine(1402) in 16S rRNA + S-adenosyl-L-methionine = N(4)-methylcytidine(1402) in 16S rRNA + S-adenosyl-L-homocysteine + H(+). In terms of biological role, specifically methylates the N4 position of cytidine in position 1402 (C1402) of 16S rRNA. This is Ribosomal RNA small subunit methyltransferase H from Sinorhizobium fredii (strain NBRC 101917 / NGR234).